The sequence spans 1115 residues: Phytochrome E (1115 aa).

In terms of domain architecture, GAF spans 213–383 (DIGTLCDTVV…AFSLQLYMEL (171 aa)). Cysteine 318 serves as a coordination point for phytochromobilin. Residues 598–669 (MALELVRLVE…ALMCRALQGE (72 aa)) form the PAS 1 domain. Residues 672–728 (RNVEVKLLKFGNHPTKEVVYLVVNACTSRDYKNDIIGVCFVGQDITPEKAVMDKFVR) form the PAC domain. The PAS 2 domain occupies 732 to 803 (DYEAIIQSLN…DALTKFMILL (72 aa)). The 221-residue stretch at 880 to 1100 (YIQQQMKNPL…YFLIDLDFKT (221 aa)) folds into the Histidine kinase domain.

Belongs to the phytochrome family. In terms of assembly, homodimer. Contains one covalently linked phytochromobilin chromophore.

Regulatory photoreceptor which exists in two forms that are reversibly interconvertible by light: the Pr form that absorbs maximally in the red region of the spectrum and the Pfr form that absorbs maximally in the far-red region. Photoconversion of Pr to Pfr induces an array of morphogenic responses, whereas reconversion of Pfr to Pr cancels the induction of those responses. Pfr controls the expression of a number of nuclear genes including those encoding the small subunit of ribulose-bisphosphate carboxylase, chlorophyll A/B binding protein, protochlorophyllide reductase, rRNA, etc. It also controls the expression of its own gene(s) in a negative feedback fashion. The sequence is that of Phytochrome E (PHYE) from Ipomoea nil (Japanese morning glory).